A 1010-amino-acid chain; its full sequence is Probable LRR receptor-like serine/threonine-protein kinase At3g47570 (1010 aa).

The signal sequence occupies residues 1 to 19; it reads MRLFLLLAFNALMLLETHG. Over 20–645 the chain is Extracellular; that stretch reads FTDETDRQAL…SSRLKKVVIG (626 aa). 2 N-linked (GlcNAc...) asparagine glycosylation sites follow: asparagine 48 and asparagine 88. 10 LRR repeats span residues 89 to 113, 114 to 137, 139 to 161, 162 to 185, 186 to 209, 211 to 233, 234 to 258, 259 to 282, 283 to 307, and 310 to 333; these read LSFLVSLDLYENFFGGTIPQEVGQL, SRLEYLDMGINYLRGPIPLGLYNC, RLLNLRLDSNRLGGSVPSELGSL, TNLVQLNLYGNNMRGKLPTSLGNL, TLLEQLALSHNNLEGEIPSDVAQL, QIWSLQLVANNFSGVFPPALYNL, SSLKLLGIGYNHFSGRLRPDLGILL, PNLLSFNMGGNYFTGSIPTTLSNI, STLERLGMNENNLTGSIPTFGNVPN, and LLFLHTNSLGSDSSRDLEFLTSLT. Asparagine 136 carries N-linked (GlcNAc...) asparagine glycosylation. N-linked (GlcNAc...) asparagine glycosylation is present at asparagine 184. N-linked (GlcNAc...) asparagine glycosylation is found at asparagine 221 and asparagine 232. Asparagine 281 and asparagine 294 each carry an N-linked (GlcNAc...) asparagine glycan. Residues asparagine 334 and asparagine 358 are each glycosylated (N-linked (GlcNAc...) asparagine). LRR repeat units follow at residues 335-359, 361-384, 385-408, 410-432, 433-455, 457-480, 481-504, 505-528, 530-551, 552-574, and 575-600; these read CTQLETLGIGRNRLGGDLPISIANL, AKLVTLDLGGTLISGSIPYDIGNL, INLQKLILDQNMLSGPLPTSLGKL, NLRYLSLFSNRLSGGIPAFIGNM, TMLETLDLSNNGFEGIVPTSLGN, SHLLELWIGDNKLNGTIPLEIMKI, QQLLRLDMSGNSLIGSLPQDIGAL, QNLGTLSLGDNKLSGKLPQTLGNC, TMESLFLEGNLFYGDIPDLKGL, VGVKEVDLSNNDLSGSIPEYFAS, and FSKLEYLNLSFNNLEGKVPVKGIFEN. Asparagine 431, asparagine 455, and asparagine 470 each carry an N-linked (GlcNAc...) asparagine glycan. N-linked (GlcNAc...) asparagine glycans are attached at residues asparagine 582 and asparagine 600. Residues 646-666 traverse the membrane as a helical segment; sequence VSVGITLLLLLFMASVTLIWL. Residues 667–1010 lie on the Cytoplasmic side of the membrane; it reads RKRKKNKETN…FFKASRTTWR (344 aa). A Phosphothreonine modification is found at threonine 699. One can recognise a Protein kinase domain in the interval 702 to 1002; sequence FSSSNMVGSG…ELISIRERFF (301 aa). ATP contacts are provided by residues 708–716 and lysine 731; that span reads VGSGSFGTV. 2 positions are modified to phosphotyrosine: tyrosine 781 and tyrosine 826. Aspartate 839 (proton acceptor) is an active-site residue. A Phosphotyrosine modification is found at tyrosine 887.

Belongs to the protein kinase superfamily. Ser/Thr protein kinase family.

Its subcellular location is the cell membrane. The catalysed reaction is L-seryl-[protein] + ATP = O-phospho-L-seryl-[protein] + ADP + H(+). It carries out the reaction L-threonyl-[protein] + ATP = O-phospho-L-threonyl-[protein] + ADP + H(+). This Arabidopsis thaliana (Mouse-ear cress) protein is Probable LRR receptor-like serine/threonine-protein kinase At3g47570.